A 313-amino-acid polypeptide reads, in one-letter code: tRNA uridine(34) hydroxylase (313 aa).

Residues 124 to 218 form the Rhodanese domain; it reads SDPEVLLIDT…YLEEVPQEET (95 aa). The Cysteine persulfide intermediate role is filled by Cys-178.

The protein belongs to the TrhO family.

It catalyses the reaction uridine(34) in tRNA + AH2 + O2 = 5-hydroxyuridine(34) in tRNA + A + H2O. In terms of biological role, catalyzes oxygen-dependent 5-hydroxyuridine (ho5U) modification at position 34 in tRNAs. This chain is tRNA uridine(34) hydroxylase, found in Pseudomonas fluorescens (strain SBW25).